The chain runs to 168 residues: DAZ-associated protein 2 (168 aa).

Residues 1–13 (MNSKGQYPTQPTY) are compositionally biased toward low complexity. Positions 1–25 (MNSKGQYPTQPTYPVQPPGNPVYPQ) are disordered. A PPAY motif is present at residues 39–42 (PPAY). Ser-77 is modified (phosphoserine).

Interacts with SOX6. Interacts with DAZ1 and DAZL. Interacts with IL17RB. May interact with FAM168B. Interacts with INCA1. Interacts with EIF4G1 and EIF4G2. Interacts (via PPAY motif) with NEDD4 (via WW domains). Interacts with transcription factor TCF4; the interaction results in localization of DAZAP2 to the nucleus. Interacts with transcription factors TCF7 and TCF7L1. Interacts with transcription factor LEF1. Interacts with serine/threonine-protein kinase HIPK2; the interaction results in phosphorylation of DAZAP2 which causes localization of DAZAP2 to the nucleus, reduces interaction of DAZAP2 with HIPK2 and prevents DAZAP2-dependent degradation of HIPK2. Interacts with ubiquitin ligase SIAH1; the interaction is decreased following phosphorylation of DAZAP2 by HIPK2. Interacts with TP53; the interaction is triggered by DNA damage. Post-translationally, ubiquitinated by SMURF2, leading to proteasomal degradation. Ubiquitinated by NEDD4, leading to proteasomal degradation. Following DNA damage, phosphorylated by HIPK2 which promotes DAZAP2 localization to the nucleus, reduces interaction of DAZAP2 with HIPK2 and SIAH1, and prevents DAZAP2-dependent ubiquitination of HIPK2 by E3 ubiquitin-protein ligase SIAH1 and subsequent HIPK2 proteasomal degradation.

Its subcellular location is the cytoplasm. It localises to the nucleus. The protein localises to the nucleus speckle. The protein resides in the nuclear body. It is found in the stress granule. Its function is as follows. In unstressed cells, promotes SIAH1-mediated polyubiquitination and degradation of the serine/threonine-protein kinase HIPK2, probably by acting as a loading factor that potentiates complex formation between HIPK2 and ubiquitin ligase SIAH1. In response to DNA damage, localizes to the nucleus following phosphorylation by HIPK2 and modulates the expression of a subset of TP53/p53 target genes by binding to TP53 at target gene promoters. This limits the expression of a number of cell death-mediating TP53 target genes, reducing DNA damage-induced cell death. Enhances the binding of transcription factor TCF7L2/TCF4, a Wnt signaling pathway effector, to the promoters of target genes. Plays a role in stress granule formation. The polypeptide is DAZ-associated protein 2 (Bos taurus (Bovine)).